We begin with the raw amino-acid sequence, 126 residues long: Aspartate 1-decarboxylase (126 aa).

The active-site Schiff-base intermediate with substrate; via pyruvic acid is the serine 25. Position 25 is a pyruvic acid (Ser) (serine 25). Threonine 57 is a substrate binding site. Residue tyrosine 58 is the Proton donor of the active site. 73–75 (GSA) is a substrate binding site.

This sequence belongs to the PanD family. As to quaternary structure, heterooctamer of four alpha and four beta subunits. Pyruvate is required as a cofactor. Post-translationally, is synthesized initially as an inactive proenzyme, which is activated by self-cleavage at a specific serine bond to produce a beta-subunit with a hydroxyl group at its C-terminus and an alpha-subunit with a pyruvoyl group at its N-terminus.

The protein resides in the cytoplasm. The catalysed reaction is L-aspartate + H(+) = beta-alanine + CO2. It functions in the pathway cofactor biosynthesis; (R)-pantothenate biosynthesis; beta-alanine from L-aspartate: step 1/1. Its function is as follows. Catalyzes the pyruvoyl-dependent decarboxylation of aspartate to produce beta-alanine. This is Aspartate 1-decarboxylase from Acidovorax ebreus (strain TPSY) (Diaphorobacter sp. (strain TPSY)).